The primary structure comprises 1193 residues: Protogenin (1193 aa).

The N-terminal stretch at 1 to 23 (MAPPVRPGMLPLLLLLLLPPLGS) is a signal peptide. Ig-like domains follow at residues 24 to 124 (VPGV…AHLT), 126 to 217 (STIS…ASLT), 230 to 317 (PTII…ATLT), and 322 to 406 (PSFV…ARLT). The Extracellular portion of the chain corresponds to 24 to 944 (VPGVWSFSEL…YYHLDQKSMT (921 aa)). 2 cysteine pairs are disulfide-bonded: Cys-54/Cys-107 and Cys-150/Cys-200. Asn-84 carries N-linked (GlcNAc...) asparagine glycosylation. The N-linked (GlcNAc...) asparagine glycan is linked to Asn-238. 2 disulfide bridges follow: Cys-251–Cys-299 and Cys-343–Cys-390. Fibronectin type-III domains lie at 416–510 (APYN…TLED), 512–608 (PLRP…TPKA), 613–712 (APKS…VRDR), 719–812 (PPHH…TLPE), and 817–912 (PPVG…VLPK). A glycan (N-linked (GlcNAc...) asparagine) is linked at Asn-625. Residues 945-965 (GIAVGVGIALTCILICVLILI) traverse the membrane as a helical segment. The Cytoplasmic portion of the chain corresponds to 966–1193 (YRSKARKSSA…LRHAAESVPV (228 aa)). Disordered stretches follow at residues 974 to 1018 (SASK…PMMP) and 1078 to 1193 (VLIS…SVPV). Polar residues-rich tracts occupy residues 978–990 (TTQS…SRAS) and 1086–1095 (PSSPGQTTSF). Residues 1105–1133 (DTEHSANSEGSHETGDSGRFSHESNDEIH) show a composition bias toward basic and acidic residues. The span at 1136–1150 (SVISSTPPTSNSLTC) shows a compositional bias: polar residues.

This sequence belongs to the immunoglobulin superfamily. DCC family.

Its subcellular location is the membrane. Functionally, may play a role in anteroposterior axis elongation. The chain is Protogenin from Rattus norvegicus (Rat).